The chain runs to 201 residues: Small ribosomal subunit protein uS4c (201 aa).

One can recognise an S4 RNA-binding domain in the interval 89 to 149; sequence MRLDNILFRL…DEQKSRALIQ (61 aa).

The protein belongs to the universal ribosomal protein uS4 family. As to quaternary structure, part of the 30S ribosomal subunit. Contacts protein S5. The interaction surface between S4 and S5 is involved in control of translational fidelity.

It is found in the plastid. It localises to the chloroplast. Functionally, one of the primary rRNA binding proteins, it binds directly to 16S rRNA where it nucleates assembly of the body of the 30S subunit. Its function is as follows. With S5 and S12 plays an important role in translational accuracy. This Coffea arabica (Arabian coffee) protein is Small ribosomal subunit protein uS4c (rps4).